Reading from the N-terminus, the 326-residue chain is NADH-quinone oxidoreductase subunit H (326 aa).

The next 8 membrane-spanning stretches (helical) occupy residues 11-31 (ILLSILKAVVILLVVVSCGAF), 81-101 (VIFTLAPMIAFTSLLLAFAIV), 114-134 (IGILFFLMMAGLGVYAVLFAG), 154-174 (LSYEVFLGLSLMGVVAQAGSF), 186-206 (LWNVIPQFFGFITFAIAGVAV), 237-257 (FFVGEYIGIVTVSALIVTLFF), 265-285 (LPPFIWFALKTAFFMMMFILI), and 302-322 (WKVCLPLTLINLLVTAAVILW).

This sequence belongs to the complex I subunit 1 family. As to quaternary structure, NDH-1 is composed of 13 different subunits. Subunits NuoA, H, J, K, L, M, N constitute the membrane sector of the complex.

It is found in the cell inner membrane. It carries out the reaction a quinone + NADH + 5 H(+)(in) = a quinol + NAD(+) + 4 H(+)(out). Its function is as follows. NDH-1 shuttles electrons from NADH, via FMN and iron-sulfur (Fe-S) centers, to quinones in the respiratory chain. The immediate electron acceptor for the enzyme in this species is believed to be ubiquinone. Couples the redox reaction to proton translocation (for every two electrons transferred, four hydrogen ions are translocated across the cytoplasmic membrane), and thus conserves the redox energy in a proton gradient. This subunit may bind ubiquinone. This Cronobacter sakazakii (strain ATCC BAA-894) (Enterobacter sakazakii) protein is NADH-quinone oxidoreductase subunit H.